A 288-amino-acid polypeptide reads, in one-letter code: Quinate/shikimate dehydrogenase (288 aa).

Lys71 and Asp107 together coordinate substrate. NAD(+) is bound by residues 132-135 (AGGA), 155-158 (NRRD), Lys205, 232-235 (CVYN), and Gly255.

This sequence belongs to the shikimate dehydrogenase family. In terms of assembly, homodimer.

It carries out the reaction L-quinate + NAD(+) = 3-dehydroquinate + NADH + H(+). The catalysed reaction is L-quinate + NADP(+) = 3-dehydroquinate + NADPH + H(+). It catalyses the reaction shikimate + NADP(+) = 3-dehydroshikimate + NADPH + H(+). The enzyme catalyses shikimate + NAD(+) = 3-dehydroshikimate + NADH + H(+). It functions in the pathway metabolic intermediate biosynthesis; chorismate biosynthesis; chorismate from D-erythrose 4-phosphate and phosphoenolpyruvate: step 4/7. Functionally, the actual biological function of YdiB remains unclear, nor is it known whether 3-dehydroshikimate or quinate represents the natural substrate. Catalyzes the reversible NAD-dependent reduction of both 3-dehydroshikimate (DHSA) and 3-dehydroquinate to yield shikimate (SA) and quinate, respectively. It can use both NAD or NADP for catalysis, however it has higher catalytic efficiency with NAD. This is Quinate/shikimate dehydrogenase from Escherichia coli (strain SMS-3-5 / SECEC).